Here is a 152-residue protein sequence, read N- to C-terminus: Transcriptional regulator MraZ (152 aa).

SpoVT-AbrB domains are found at residues 5–52 (ATLV…PLPE) and 81–124 (ASEC…DETT).

It belongs to the MraZ family. As to quaternary structure, forms oligomers.

It localises to the cytoplasm. Its subcellular location is the nucleoid. In terms of biological role, negatively regulates its own expression and that of the subsequent genes in the proximal part of the division and cell wall (dcw) gene cluster. Acts by binding directly to DNA. May also regulate the expression of genes outside the dcw cluster. The polypeptide is Transcriptional regulator MraZ (Klebsiella pneumoniae (strain 342)).